Reading from the N-terminus, the 294-residue chain is ATP synthase gamma chain (294 aa).

This sequence belongs to the ATPase gamma chain family. In terms of assembly, F-type ATPases have 2 components, CF(1) - the catalytic core - and CF(0) - the membrane proton channel. CF(1) has five subunits: alpha(3), beta(3), gamma(1), delta(1), epsilon(1). CF(0) has three main subunits: a, b and c.

The protein resides in the cell inner membrane. Functionally, produces ATP from ADP in the presence of a proton gradient across the membrane. The gamma chain is believed to be important in regulating ATPase activity and the flow of protons through the CF(0) complex. The chain is ATP synthase gamma chain from Nitrosomonas europaea (strain ATCC 19718 / CIP 103999 / KCTC 2705 / NBRC 14298).